A 294-amino-acid chain; its full sequence is Ribosomal protein L11 methyltransferase (294 aa).

S-adenosyl-L-methionine contacts are provided by Thr144, Gly165, Asp187, and Asn229.

This sequence belongs to the methyltransferase superfamily. PrmA family.

It localises to the cytoplasm. It carries out the reaction L-lysyl-[protein] + 3 S-adenosyl-L-methionine = N(6),N(6),N(6)-trimethyl-L-lysyl-[protein] + 3 S-adenosyl-L-homocysteine + 3 H(+). Methylates ribosomal protein L11. This chain is Ribosomal protein L11 methyltransferase, found in Pseudomonas aeruginosa (strain LESB58).